We begin with the raw amino-acid sequence, 289 residues long: Ubiquinone biosynthesis O-methyltransferase (289 aa).

R36 is a binding site for S-adenosyl-L-methionine. The RPE1 insert domain maps to 50–98 (RHLSKLTYREELVGNMQHSTAAYALVREDASSRLTHKLPLEAEFEKMSN). Residues G109, D130, and L172 each contribute to the S-adenosyl-L-methionine site.

This sequence belongs to the methyltransferase superfamily. UbiG/COQ3 family.

The catalysed reaction is a 3-demethylubiquinol + S-adenosyl-L-methionine = a ubiquinol + S-adenosyl-L-homocysteine + H(+). The enzyme catalyses a 3-(all-trans-polyprenyl)benzene-1,2-diol + S-adenosyl-L-methionine = a 2-methoxy-6-(all-trans-polyprenyl)phenol + S-adenosyl-L-homocysteine + H(+). It functions in the pathway cofactor biosynthesis; ubiquinone biosynthesis. Its function is as follows. O-methyltransferase that catalyzes the 2 O-methylation steps in the ubiquinone biosynthetic pathway. The protein is Ubiquinone biosynthesis O-methyltransferase of Rickettsia conorii (strain ATCC VR-613 / Malish 7).